Here is a 195-residue protein sequence, read N- to C-terminus: ATP-dependent Clp protease proteolytic subunit (195 aa).

Residue Ser97 is the Nucleophile of the active site. His122 is a catalytic residue.

It belongs to the peptidase S14 family. Fourteen ClpP subunits assemble into 2 heptameric rings which stack back to back to give a disk-like structure with a central cavity, resembling the structure of eukaryotic proteasomes.

It is found in the cytoplasm. The enzyme catalyses Hydrolysis of proteins to small peptides in the presence of ATP and magnesium. alpha-casein is the usual test substrate. In the absence of ATP, only oligopeptides shorter than five residues are hydrolyzed (such as succinyl-Leu-Tyr-|-NHMec, and Leu-Tyr-Leu-|-Tyr-Trp, in which cleavage of the -Tyr-|-Leu- and -Tyr-|-Trp bonds also occurs).. In terms of biological role, cleaves peptides in various proteins in a process that requires ATP hydrolysis. Has a chymotrypsin-like activity. Plays a major role in the degradation of misfolded proteins. This Lactobacillus acidophilus (strain ATCC 700396 / NCK56 / N2 / NCFM) protein is ATP-dependent Clp protease proteolytic subunit.